A 389-amino-acid chain; its full sequence is Choline/ethanolaminephosphotransferase 1 (389 aa).

The helical transmembrane segment at 40–60 (VFPLWMPPNMITLMGFMFLVT) threads the bilayer. Residue asparagine 48 participates in CDP-choline binding. Residues aspartate 95 and aspartate 98 each contribute to the Mg(2+) site. Arginine 103 is a CDP-choline binding site. Aspartate 116 is a binding site for Mg(2+). Histidine 117 functions as the Proton acceptor in the catalytic mechanism. Residue aspartate 120 coordinates Mg(2+). The next 7 membrane-spanning stretches (helical) occupy residues 141-161 (TFWF…EHYF), 176-196 (GLAL…EWWA), 221-241 (VLYM…VTNV), 252-272 (MVLA…VLIW), 280-300 (LIAT…GFLV), 322-344 (SLLY…GVPL), and 350-370 (VLLG…TSVI).

The protein belongs to the CDP-alcohol phosphatidyltransferase class-I family. The cofactor is Mg(2+). It depends on Mn(2+) as a cofactor.

Its subcellular location is the membrane. The catalysed reaction is CDP-ethanolamine + a 1,2-diacyl-sn-glycerol = a 1,2-diacyl-sn-glycero-3-phosphoethanolamine + CMP + H(+). It carries out the reaction CDP-choline + a 1,2-diacyl-sn-glycerol = a 1,2-diacyl-sn-glycero-3-phosphocholine + CMP + H(+). It functions in the pathway phospholipid metabolism; phosphatidylethanolamine biosynthesis; phosphatidylethanolamine from ethanolamine: step 3/3. The protein operates within phospholipid metabolism; phosphatidylcholine biosynthesis; phosphatidylcholine from phosphocholine: step 2/2. Catalyzes both phosphatidylcholine and phosphatidylethanolamine biosynthesis from CDP-choline and CDP-ethanolamine, respectively. Has a higher cholinephosphotransferase activity than ethanolaminephosphotransferase activity. In Arabidopsis thaliana (Mouse-ear cress), this protein is Choline/ethanolaminephosphotransferase 1 (AAPT1).